Here is a 239-residue protein sequence, read N- to C-terminus: Uracil-DNA glycosylase (239 aa).

Residue aspartate 65 is the Proton acceptor of the active site.

Belongs to the uracil-DNA glycosylase (UDG) superfamily. UNG family.

It localises to the cytoplasm. The catalysed reaction is Hydrolyzes single-stranded DNA or mismatched double-stranded DNA and polynucleotides, releasing free uracil.. Functionally, excises uracil residues from the DNA which can arise as a result of misincorporation of dUMP residues by DNA polymerase or due to deamination of cytosine. In Levilactobacillus brevis (strain ATCC 367 / BCRC 12310 / CIP 105137 / JCM 1170 / LMG 11437 / NCIMB 947 / NCTC 947) (Lactobacillus brevis), this protein is Uracil-DNA glycosylase.